Reading from the N-terminus, the 196-residue chain is Protein hunchback (196 aa).

Disordered stretches follow at residues 16–60 (SHHH…NTNL) and 90–196 (AMTP…KYMA). The span at 17-30 (HHHHHHHAHHSYHQ) shows a compositional bias: basic residues. A compositionally biased stretch (polar residues) spans 92-103 (TPSSSNNDQNSP). Residues 125 to 144 (PTATTTTTPAAAAPTTTAAT) show a composition bias toward low complexity. A compositionally biased stretch (basic and acidic residues) spans 176–196 (AEREKEHDLMSNSSEDMKYMA).

This sequence belongs to the hunchback C2H2-type zinc-finger protein family.

The protein localises to the nucleus. In terms of biological role, gap class segmentation protein that controls development of head structures. This chain is Protein hunchback (hb), found in Drosophila silvestris (Fruit fly).